A 335-amino-acid polypeptide reads, in one-letter code: Nucleoid-associated protein PputGB1_0980 (335 aa).

It belongs to the YejK family.

The protein localises to the cytoplasm. It localises to the nucleoid. The sequence is that of Nucleoid-associated protein PputGB1_0980 from Pseudomonas putida (strain GB-1).